The sequence spans 127 residues: MAVAKADILDAIAGMTVLELSELIKEMEDKFGVSAAAAAVAVAAPAAGAGAAAAAEEQTEFTVMLNSAGEKKVEVIKVVRAATGLGLKEAKDLVDGAPKAVKEGVSKADADALKKQLEEAGASVEVK.

This sequence belongs to the bacterial ribosomal protein bL12 family. In terms of assembly, homodimer. Part of the ribosomal stalk of the 50S ribosomal subunit. Forms a multimeric L10(L12)X complex, where L10 forms an elongated spine to which 2 to 4 L12 dimers bind in a sequential fashion. Binds GTP-bound translation factors.

Its function is as follows. Forms part of the ribosomal stalk which helps the ribosome interact with GTP-bound translation factors. Is thus essential for accurate translation. In Thiobacillus denitrificans (strain ATCC 25259 / T1), this protein is Large ribosomal subunit protein bL12.